The sequence spans 421 residues: O-acetyl-L-homoserine sulfhydrylase 1 (421 aa).

At Lys206 the chain carries N6-(pyridoxal phosphate)lysine.

The protein belongs to the trans-sulfuration enzymes family. In terms of assembly, homotetramer. The cofactor is pyridoxal 5'-phosphate.

The catalysed reaction is O-acetyl-L-homoserine + hydrogen sulfide = L-homocysteine + acetate. The protein operates within amino-acid biosynthesis; L-methionine biosynthesis via de novo pathway; L-homocysteine from O-acetyl-L-homoserine: step 1/1. With respect to regulation, inhibited by the carbonyl reagents hydroxylamine and phenylhydrazine. Also inhibited by methionine and propargylglycine. Catalyzes the conversion of O-acetyl-L-homoserine (OAH) into homocysteine in the methionine biosynthesis pathway. Has weak activity with O-acetyl-L-serine, O-phospho-L-serine, L-serine, O-succinyl-L-homoserine and L-homoserine. Shows low CTT beta-lyase activity and very low CTT gamma-synthase activity. The sequence is that of O-acetyl-L-homoserine sulfhydrylase 1 from Thermus thermophilus (strain ATCC 27634 / DSM 579 / HB8).